The primary structure comprises 449 residues: SWI/SNF chromatin-remodeling accessory subunit 2 (449 aa).

Residues 1-11 (MHSQQRPNPQM) are compositionally biased toward polar residues. Residues 1–56 (MHSQQRPNPQMNRHPYGTPGSAPQMRRPGGFAGQPPQMHGPRMVAPPAAPLPKKKK) form a disordered region. One can recognise an SWIB/MDM2 domain in the interval 223-300 (NHPAKFKLHP…PNKLHQLLQQ (78 aa)).

Belongs to the SMARCD family. Component of the multiprotein chromatin-remodeling complexes SWI/SNF: SWI/SNF-A (BAF), SWI/SNF-B (PBAF) and related complexes. The canonical complex contains a catalytic subunit swsn-4, core subunits swsn-1 and swsn-5, and accessory subunits swsn-3, swsn-6, phf-10, dpff-1, swsn-9 and either ham-3/swsn-2.1 or swsn-2.2.

It is found in the nucleus. The protein localises to the nucleoplasm. It localises to the chromosome. Its subcellular location is the nucleus envelope. In terms of biological role, involved in transcriptional activation and repression of select genes by chromatin remodeling (alteration of DNA-nucleosome topology). Component of SWI/SNF chromatin remodeling complexes that carry out key enzymatic activities, changing chromatin structure by altering DNA-histone contacts within a nucleosome in an ATP-dependent manner. Probably regulates vulva development through the let-60/Ras pathway. Involved in nuclear reassembly after mitosis and recruitment of nuclear envelope protein, mel-28, to the nuclear periphery in the early embryo and in the adult germline. Involved in gonadogenesis. The chain is SWI/SNF chromatin-remodeling accessory subunit 2 from Caenorhabditis elegans.